The primary structure comprises 178 residues: Caveolin-1 (178 aa).

Ser-2 carries the post-translational modification N-acetylserine. Residue Ser-2 is modified to Phosphoserine. The interval 2-94 is required for homooligomerization; it reads SGGKYVDAEG…WKASFTTFTV (93 aa). The Cytoplasmic portion of the chain corresponds to 2 to 104; that stretch reads SGGKYVDAEG…TKYWFYRLLS (103 aa). At Lys-5 the chain carries N6-acetyllysine; alternate. Residue Lys-5 forms a Glycyl lysine isopeptide (Lys-Gly) (interchain with G-Cter in ubiquitin); alternate linkage. At Tyr-6 the chain carries Phosphotyrosine. Phosphotyrosine; by ABL1 is present on Tyr-14. Tyr-25 carries the phosphotyrosine modification. Residues Lys-26, Lys-30, Lys-39, Lys-47, and Lys-57 each participate in a glycyl lysine isopeptide (Lys-Gly) (interchain with G-Cter in ubiquitin) cross-link. The interval 82 to 94 is interaction with CAVIN3; sequence DGIWKASFTTFTV. The segment at residues 105-125 is an intramembrane region (helical); sequence ALLGIPLALLWGIYFAILSFL. The Cytoplasmic portion of the chain corresponds to 126-178; the sequence is HIWAVVPCIRSYLIEIQCISRVYSICIHTFCDPLFEAIGKVFSNIRATVQKEI. The interval 131-142 is interacts with SPRY1, SPRY2, SPRY3 and SPRY4; the sequence is VPCIRSYLIEIQ. 3 S-palmitoyl cysteine lipidation sites follow: Cys-133, Cys-143, and Cys-156. The interacts with SPRY1, SPRY2, and SPRY4 stretch occupies residues 149–160; the sequence is SICIHTFCDPLF. The tract at residues 167 to 178 is interacts with SPRY1, SPRY2, SPRY3 and SPRY4; the sequence is FSNIRATVQKEI.

It belongs to the caveolin family. As to quaternary structure, homooligomer. Interacts with GLIPR2. Interacts with NOSTRIN. Interacts with SNAP25 and STX1A. Interacts (via the N-terminus) with DPP4; the interaction is direct. Interacts with CTNNB1, CDH1 and JUP. Interacts with PACSIN2; this interaction induces membrane tubulation. Interacts with SLC7A9. Interacts with BMX and BTK. Interacts with TGFBR1. Interacts with CAVIN3 (via leucine-zipper domain) in a cholesterol-sensitive manner. Interacts with CAVIN1. Interacts with EHD2 in a cholesterol-dependent manner. Forms a ternary complex with UBXN6 and VCP; mediates CAV1 targeting to lysosomes for degradation. Interacts with ABCG1; this interaction regulates ABCG1-mediated cholesterol efflux. Interacts with NEU3; this interaction enhances NEU3 sialidase activity within caveola. Interacts (via C-terminus) with SPRY1, SPRY2 (via C-terminus), SPRY3, and SPRY4. Interacts with IGFBP5; this interaction allows trafficking of IGFBP5 from the plasma membrane to the nucleus. In terms of processing, phosphorylated at Tyr-14 by ABL1 in response to oxidative stress. Ubiquitinated. Undergo monoubiquitination and multi- and/or polyubiquitination. Monoubiquitination of N-terminal lysines promotes integration in a ternary complex with UBXN6 and VCP which promotes oligomeric CAV1 targeting to lysosomes for degradation. Ubiquitinated by ZNRF1; leading to degradation and modulation of the TLR4-mediated immune response.

The protein resides in the golgi apparatus membrane. Its subcellular location is the cell membrane. It localises to the membrane. The protein localises to the caveola. It is found in the membrane raft. Functionally, may act as a scaffolding protein within caveolar membranes. Forms a stable heterooligomeric complex with CAV2 that targets to lipid rafts and drives caveolae formation. Mediates the recruitment of CAVIN proteins (CAVIN1/2/3/4) to the caveolae. Interacts directly with G-protein alpha subunits and can functionally regulate their activity. Involved in the costimulatory signal essential for T-cell receptor (TCR)-mediated T-cell activation. Its binding to DPP4 induces T-cell proliferation and NF-kappa-B activation in a T-cell receptor/CD3-dependent manner. Recruits CTNNB1 to caveolar membranes and may regulate CTNNB1-mediated signaling through the Wnt pathway. Negatively regulates TGFB1-mediated activation of SMAD2/3 by mediating the internalization of TGFBR1 from membrane rafts leading to its subsequent degradation. Binds 20(S)-hydroxycholesterol (20(S)-OHC). The sequence is that of Caveolin-1 (CAV1) from Ornithorhynchus anatinus (Duckbill platypus).